Here is a 266-residue protein sequence, read N- to C-terminus: Auxin-responsive protein IAA21 (266 aa).

The EAR-like (transcriptional repression) signature appears at 24-28 (LRLGL). The segment at 27-50 (GLPGTAEEAESEGGGGGGTDAAPL) is disordered. The 103-residue stretch at 146-248 (CLYVKVSMDG…SCRRLRIMKG (103 aa)) folds into the PB1 domain.

This sequence belongs to the Aux/IAA family. In terms of assembly, homodimers and heterodimers. Highly expressed in flowers. Expressed in roots and seedlings.

The protein localises to the nucleus. Functionally, aux/IAA proteins are short-lived transcriptional factors that function as repressors of early auxin response genes at low auxin concentrations. The chain is Auxin-responsive protein IAA21 (IAA21) from Oryza sativa subsp. japonica (Rice).